A 339-amino-acid chain; its full sequence is Glycerol-3-phosphate dehydrogenase [NAD(P)+] (339 aa).

NADPH contacts are provided by S15, Y16, H36, and K110. The sn-glycerol 3-phosphate site is built by K110, G139, and T141. A143 is an NADPH binding site. Sn-glycerol 3-phosphate is bound by residues K195, D248, S258, R259, and N260. Catalysis depends on K195, which acts as the Proton acceptor. R259 provides a ligand contact to NADPH. The NADPH site is built by V283 and E285.

The protein belongs to the NAD-dependent glycerol-3-phosphate dehydrogenase family.

It is found in the cytoplasm. It catalyses the reaction sn-glycerol 3-phosphate + NAD(+) = dihydroxyacetone phosphate + NADH + H(+). The enzyme catalyses sn-glycerol 3-phosphate + NADP(+) = dihydroxyacetone phosphate + NADPH + H(+). Its pathway is membrane lipid metabolism; glycerophospholipid metabolism. In terms of biological role, catalyzes the reduction of the glycolytic intermediate dihydroxyacetone phosphate (DHAP) to sn-glycerol 3-phosphate (G3P), the key precursor for phospholipid synthesis. The protein is Glycerol-3-phosphate dehydrogenase [NAD(P)+] of Cronobacter sakazakii (strain ATCC BAA-894) (Enterobacter sakazakii).